A 2325-amino-acid chain; its full sequence is Protein Ycf2 (2325 aa).

3 disordered regions span residues 168–189 (SSQLKGSSDQSRDHFDSIGTED), 221–251 (TEIESDRFSKGLSGSSSKSRLFTEGEKEMNN), and 947–1006 (KRKK…KRKE). The segment covering 230 to 240 (KGLSGSSSKSR) has biased composition (low complexity). 2 stretches are compositionally biased toward basic and acidic residues: residues 241–250 (LFTEGEKEMN) and 955–1004 (KRKE…PEKR). An ATP-binding site is contributed by 1436–1443 (GSIGSGRS). Disordered stretches follow at residues 1510–1529 (YEDRDSDDYDEPGASDDYEP), 1855–1996 (LVGS…LLRP), and 2063–2179 (PAEE…DGFS). Positions 1861-1976 (TEEEVEGTEE…VEGTEDEEGE (116 aa)) are enriched in acidic residues. A compositionally biased stretch (basic and acidic residues) spans 1977-1989 (GTEKDSSQFDNDR). Composition is skewed to acidic residues over residues 2063 to 2080 (PAEEIPEEEDPLPEEALE) and 2087 to 2162 (GEEE…ENDS).

It belongs to the Ycf2 family.

The protein resides in the plastid. It is found in the chloroplast stroma. Functionally, probable ATPase of unknown function. Its presence in a non-photosynthetic plant (Epifagus virginiana) and experiments in tobacco indicate that it has an essential function which is probably not related to photosynthesis. The chain is Protein Ycf2 from Oenothera biennis (German evening primrose).